Here is a 1009-residue protein sequence, read N- to C-terminus: Membrane alanyl aminopeptidase (1009 aa).

The signal sequence occupies residues 1-15 (MAAIKLLVLSLACAC). Residues 16-52 (VIAHSPIPPASRTIFLDERLEGGAFENIDAFENIELS) constitute a propeptide, activation peptide. Residue 338-342 (GAMEN) coordinates substrate. Residue His-374 participates in Zn(2+) binding. The Proton acceptor role is filled by Glu-375. Zn(2+)-binding residues include His-378 and Glu-397. N-linked (GlcNAc...) asparagine glycosylation occurs at Asn-906. The interval 955-980 (PSTSTTSTTAAPTTVTQPTITEPSTP) is disordered. Asp-987 is lipidated: GPI-anchor amidated aspartate. Residues 988–1009 (SAMTSFASLFIISLGAILHLIL) constitute a propeptide, removed in mature form.

It belongs to the peptidase M1 family. Zn(2+) is required as a cofactor.

The protein resides in the cell membrane. Binds to the B.thuringiensis toxin, CryIA(C). The protein is Membrane alanyl aminopeptidase of Heliothis virescens (Tobacco budworm moth).